Consider the following 1090-residue polypeptide: UPF0507 protein EC1118_1M3_1541g (1090 aa).

The VPS9 domain maps to 289 to 436; the sequence is FSVNQLLTDF…FEDFNKNTGN (148 aa).

Belongs to the UPF0507 family.

This is UPF0507 protein EC1118_1M3_1541g from Saccharomyces cerevisiae (strain Lalvin EC1118 / Prise de mousse) (Baker's yeast).